A 524-amino-acid polypeptide reads, in one-letter code: G1/S-specific cyclin-E (524 aa).

Residues 1-155 (MAGRKSSRTA…EESHEMVRLE (155 aa)) are disordered. Over residues 18 to 47 (KPERKSAILSPHDELRERLLETAIDMKENI) the composition is skewed to basic and acidic residues. The span at 48-62 (PQRNTRNSSVGSQKS) shows a compositional bias: polar residues. 3 stretches are compositionally biased toward basic and acidic residues: residues 63 to 78 (DCSE…EGPA), 86 to 95 (KHRNGSREDS), and 146 to 155 (EESHEMVRLE).

The protein belongs to the cyclin family. Cyclin E subfamily. Interacts with a member of the CDK2/CDK protein kinases to form a serine/threonine kinase holoenzyme complex. The cyclin subunit imparts substrate specificity to the complex. Expressed dynamically in proliferating cells throughout development. Detectable in larval blast cells undergoing active proliferation that give rise to all tissue types, including germline, intestine, hypodermis, neurons, and muscle.

It is found in the nucleus. It localises to the cytoplasm. Its subcellular location is the cytoskeleton. The protein resides in the microtubule organizing center. The protein localises to the centrosome. It is found in the centriole. Its function is as follows. Essential for the control of the cell cycle at the G1/S (start) transition. In association with cdk-2, regulates proliferation, quiescent state and cell fate during the development of several cell lineages. In the embryo, initiates the establishment of cell polarity through the recruitment of the centrosomal proteins spd-2 and spd-5 during prophase. During the development of the vulva, controls the onset of vulval cell terminal differentiation by controlling the duration of G1 phase. During hypoderm development at early larval stages, controls syncytial fate of seam cell daughter cells. Involved in the progression of cell division in the intestinal lineage in larvae, and in particular in endoreplication, a specific growth pathway in the intestinal epithelium, required for feeding and gut development in growing larvae. By controlling the activity of translational repressor gld-1, regulates the pool of germline stem cells and the size of the mitotic zone by preventing entry into meiosis. In addition, repression of expression by gld-1 prevents mitosis re-entry in meiotic germline cells. In Caenorhabditis elegans, this protein is G1/S-specific cyclin-E.